Reading from the N-terminus, the 83-residue chain is Bublin coiled-coil protein (83 aa).

The tract at residues 1-25 (MSGPNGDLGMPVDAGTEGENDSFGE) is disordered. A coiled-coil region spans residues 25 to 74 (EAEYAAINSMLDQINSCLDHLEEKNDHLHARLQELLESNRQTRLEFQQQL). Position 82 is a phosphoserine (serine 82).

Belongs to the UPF0184 (EST00098) family.

Its subcellular location is the cell junction. It localises to the cytoplasm. The protein localises to the cytoskeleton. Its function is as follows. Essential for intermediate filament organization in intestinal cells, interacts with intermediate filament and regulates intestinal lumen morphology. The polypeptide is Bublin coiled-coil protein (Mus musculus (Mouse)).